The following is a 103-amino-acid chain: Small ribosomal subunit protein uS10 (103 aa).

It belongs to the universal ribosomal protein uS10 family. In terms of assembly, part of the 30S ribosomal subunit.

Functionally, involved in the binding of tRNA to the ribosomes. In Magnetococcus marinus (strain ATCC BAA-1437 / JCM 17883 / MC-1), this protein is Small ribosomal subunit protein uS10.